The following is a 258-amino-acid chain: Snake venom serine proteinase 8 (258 aa).

Residues 1-18 form the signal peptide; the sequence is MVLIRVLANLLILQLSYA. Positions 19–24 are excised as a propeptide; sequence QKSSEL. Residues 25 to 249 form the Peptidase S1 domain; that stretch reads VIGGDECNIN…YNDWIQSIIA (225 aa). 6 cysteine pairs are disulfide-bonded: cysteine 31-cysteine 163, cysteine 50-cysteine 66, cysteine 98-cysteine 256, cysteine 142-cysteine 210, cysteine 174-cysteine 189, and cysteine 200-cysteine 225. Residue asparagine 44 is glycosylated (N-linked (GlcNAc...) asparagine). Catalysis depends on charge relay system residues histidine 65 and aspartate 110. The active-site Charge relay system is the serine 204.

This sequence belongs to the peptidase S1 family. Snake venom subfamily. As to quaternary structure, monomer. In terms of tissue distribution, expressed by the venom gland.

Its subcellular location is the secreted. Its function is as follows. Snake venom serine protease that may act in the hemostasis system of the prey. This is Snake venom serine proteinase 8 from Crotalus adamanteus (Eastern diamondback rattlesnake).